We begin with the raw amino-acid sequence, 40 residues long: Sauvagin (40 aa).

Gln-1 carries the post-translational modification Pyrrolidone carboxylic acid. The residue at position 40 (Ile-40) is an Isoleucine amide.

This sequence belongs to the sauvagine/corticotropin-releasing factor/urotensin I family.

The protein localises to the secreted. Hypotensive and diuretic peptide. The protein is Sauvagin of Phyllomedusa sauvagei (Sauvage's leaf frog).